The sequence spans 119 residues: Amicyanin-alpha (119 aa).

The N-terminal stretch at 1 to 20 (MRALAFAAALAAFSATAALA) is a signal peptide. The region spanning 21–119 (AGALEAVQEA…PFMKGKVVVE (99 aa)) is the Plastocyanin-like domain. Cu cation-binding residues include His-67, Cys-106, His-109, and Met-112.

Requires Cu cation as cofactor.

It localises to the periplasm. Its pathway is one-carbon metabolism; methylamine degradation. Primary acceptor of electrons from methylamine dehydrogenase. Passes those electrons on either a soluble cytochrome c or to pseudoazurin. In Methylorubrum extorquens (strain ATCC 14718 / DSM 1338 / JCM 2805 / NCIMB 9133 / AM1) (Methylobacterium extorquens), this protein is Amicyanin-alpha (mauC).